Here is a 119-residue protein sequence, read N- to C-terminus: Tubulin-specific chaperone A (119 aa).

This sequence belongs to the TBCA family. Supercomplex made of cofactors A to E. Cofactors A and D function by capturing and stabilizing tubulin in a quasi-native conformation. Cofactor E binds to the cofactor D-tubulin complex; interaction with cofactor C then causes the release of tubulin polypeptides that are committed to the native state.

Its subcellular location is the cytoplasm. It is found in the cytoskeleton. Functionally, required for the maintenance of microtubule structures and cell polarity. Beta-tubulin-folding protein; may have a regulatory role in the tubulin-folding pathway. The sequence is that of Tubulin-specific chaperone A (alp31) from Schizosaccharomyces pombe (strain 972 / ATCC 24843) (Fission yeast).